Reading from the N-terminus, the 1016-residue chain is MGSRIKQNPETTFEVYVEVAYPRTGGTLSDPEVQRQFPEDYSDQEVLQTLTKFCFPFYVDSLTVSQVGQNFTFVLTDIDSKQRFGFCRLSSGAKSCFCILSYLPWFEVFYKLLNILADYTTKRQESQWNELLETLHRLPIPDPGVSVHLSVHSYFTVPDSRELPSIPENRNLTEYFVAVDVNNMLHLYASMLYERRILIICSKLSTLTACIHGSAAMLYPMYWQHVYIPVLPPHLLDYCCAPMPYLIGIHLSLMEKVRNMALDDVVILNVDTNTLETPFDDLQSLPNDVISSLKNRLKKVSTTTGDGVARAFLKAQAAFFGSYRNALKIEPEEPITFSEEAFVSHYRSGAMKQFLQNATQLQLFKQFIDGRLDLLNSGEGFSDVFEEEINMGEYAGSDKLYHQWLSTVRKGSGAILNTVKTKANPAMKTVYKFAKDHAKMGIKEVKNRLKQKDITENGCVSSAEDPLPKTMPSPQAETQDPRLREDRRPITVHFGQVRPPRPHVVRRPKSNITVEGRRTSVSSPEQPQPYRTLKESDSAEGDETESPEQLVREPWGPTPAPPDRAASIDLLEDVFSSLDVEAPLQPLGQAKSLEDLRAPKDLREQPGSFDYQRLDLCRSERGLSMAAALKLAHPYTKLWSLGQDDMAIPSKPSITSPEKPSALLGTSPALPLRPQNQEGILSPSIKEETPIPTPGSITIPRPQGRKTPELGIVPPPPTARPAKLQAAGGPLGDFSSEPLQMDRERQAALSPALLSGLLPRAVPQGPTELLQPPSPAPGAAGTGSDALLALLDPLNTAWSGSTIPSHPATPSAATPFIPQLSFPPTVTPTPFVQTPLNPFVPSVPVVPPSMPLSSTPARPFGTPPASLGPAYAPSILLSSSGFYAPHRSQPNLSALSMPNLFGQIPMGAHTSPLQPLGPPAVAPSRIRTLPLARSSARAAEAKQGLALRPGESPLLPPRPPQSLQPTPQPSVPTQARDPFEDLLRKTKQDVSPSPAPALAPASTSVEQLRRQWETFE.

Positions 13-145 constitute a uDENN domain; that stretch reads FEVYVEVAYP…HRLPIPDPGV (133 aa). The cDENN domain occupies 162 to 298; that stretch reads ELPSIPENRN…VISSLKNRLK (137 aa). In terms of domain architecture, dDENN spans 300-378; the sequence is VSTTTGDGVA…DGRLDLLNSG (79 aa). The FXDXF motif motif lies at 381–385; sequence FSDVF. The disordered stretch occupies residues 453 to 565; sequence DITENGCVSS…GPTPAPPDRA (113 aa). Phosphoserine is present on Ser473. The span at 479-489 shows a compositional bias: basic and acidic residues; sequence QDPRLREDRRP. Positions 500–509 are enriched in basic residues; sequence PRPHVVRRPK. A Phosphothreonine modification is found at Thr519. 6 positions are modified to phosphoserine: Ser520, Ser522, Ser523, Ser536, Ser538, and Ser546. The Clathrin box signature appears at 569–578; sequence DLLEDVFSSL. Ser592 bears the Phosphoserine mark. The interval 681 to 737 is disordered; it reads LSPSIKEETPIPTPGSITIPRPQGRKTPELGIVPPPPTARPAKLQAAGGPLGDFSSE. Phosphoserine is present on Ser750. Arg760 is modified (omega-N-methylarginine). Disordered regions lie at residues 763-783 and 935-1016; these read PQGPTELLQPPSPAPGAAGTG and SARA…ETFE. Residues 954-970 are compositionally biased toward pro residues; that stretch reads LLPPRPPQSLQPTPQPS. Composition is skewed to basic and acidic residues over residues 977 to 988 and 1007 to 1016; these read DPFEDLLRKTKQ and QLRRQWETFE.

In terms of assembly, interacts with RAB35. Interacts with clathrin and with the adapter protein complex 2, AP-2. Interacts with ITSN1 and SH3GL2. Interacts (when phosphorylated) with YWHAE. Phosphorylated on serine and/or threonine in an Akt-dependent manner. Phosphorylation probably regulates the guanine nucleotide exchange factor (GEF) activity, possibly by disrupting an intramolecular interaction between the DENN domain and the C-terminus of the protein, thereby relieving the autoinhibition.

Its subcellular location is the cytoplasmic vesicle. It localises to the clathrin-coated vesicle membrane. It is found in the presynaptic cell membrane. With respect to regulation, the guanine nucleotide exchange factor (GEF) activity is autoinhibited. Autoinhibition may be the result of intramolecular interaction between the DENN domain and the C-terminus, which is disrupted upon phosphorylation. Activation is regulated by Akt activation. In terms of biological role, guanine nucleotide exchange factor (GEF) regulating clathrin-mediated endocytosis through RAB35 activation. Promotes the exchange of GDP to GTP, converting inactive GDP-bound RAB35 into its active GTP-bound form. Regulates clathrin-mediated endocytosis of synaptic vesicles and mediates exit from early endosomes. Binds phosphatidylinositol-phosphates (PtdInsPs), with some preference for PtdIns(3)P. The polypeptide is DENN domain-containing protein 1A (Dennd1a) (Mus musculus (Mouse)).